A 289-amino-acid polypeptide reads, in one-letter code: WUSCHEL-related homeobox 1 (289 aa).

The segment covering 1 to 11 (MDHMQQQQRQQ) has biased composition (low complexity). A disordered region spans residues 1–34 (MDHMQQQQRQQVGGGGGEEVAGRGGVPVCRPSGT). Over residues 12–25 (VGGGGGEEVAGRGG) the composition is skewed to gly residues. Positions 31 to 96 (PSGTRWTPTT…NHKARERQKK (66 aa)) form a DNA-binding region, homeobox; WUS-type.

Belongs to the WUS homeobox family. In terms of assembly, interacts with TPR1, TPR2 and TPR3. In terms of tissue distribution, expressed in young leaf primordia. Expressed in branch an floral meristems. Transiently expressed in the shoot apex.

It localises to the nucleus. In terms of biological role, transcription repressor required for the formation and development of tiller buds and panicles. Required for tiller formation and female sterility. Required for the early developmental stages of axillary meristem formation. Plays a role in maintaining the axillary premeristem zone and in promoting the formation of the axillary meristem by promoting OSH1 expression. Does not seem to be involved in maintenance of the shoot apical meristem (SAM). The chain is WUSCHEL-related homeobox 1 from Oryza sativa subsp. japonica (Rice).